We begin with the raw amino-acid sequence, 267 residues long: Tryptophan synthase alpha chain (267 aa).

Residues Glu49 and Asp60 each act as proton acceptor in the active site.

It belongs to the TrpA family. Tetramer of two alpha and two beta chains.

It carries out the reaction (1S,2R)-1-C-(indol-3-yl)glycerol 3-phosphate + L-serine = D-glyceraldehyde 3-phosphate + L-tryptophan + H2O. The protein operates within amino-acid biosynthesis; L-tryptophan biosynthesis; L-tryptophan from chorismate: step 5/5. Its function is as follows. The alpha subunit is responsible for the aldol cleavage of indoleglycerol phosphate to indole and glyceraldehyde 3-phosphate. The chain is Tryptophan synthase alpha chain from Geobacter sp. (strain M21).